Here is a 183-residue protein sequence, read N- to C-terminus: Proton-transporting V-type ATPase complex assembly regulator TMEM9 (183 aa).

Positions 1–20 (MKLLCLVAVVGCLLVPPAQA) are cleaved as a signal peptide. N-linked (GlcNAc...) asparagine glycans are attached at residues Asn21, Asn38, and Asn47. Residues 21 to 89 (NKSSEDIRCK…YEERSTTTIK (69 aa)) lie on the Extracellular side of the membrane. Residues 90-110 (VIIVIYLSVVGALLLYMAFLM) form a helical membrane-spanning segment. Residues 111–183 (LVDPLIRKPD…TVFDRHKMLS (73 aa)) are Cytoplasmic-facing. Ser144 carries the post-translational modification Phosphoserine.

It belongs to the TMEM9 family. As to quaternary structure, interacts with the v-ATPase accessory protein ATP6AP2 and with the v-ATPase complex subunit ATP6V0D1; these interactions lead to the assembly of the v-ATPase complex. In terms of processing, N-glycosylated. As to expression, expressed in heart, lung, kidney, liver and intestines. Enriched in the hepatocytes around the central vein.

Its subcellular location is the lysosome membrane. The protein localises to the late endosome membrane. It is found in the endosome. It localises to the multivesicular body membrane. In terms of biological role, transmembrane protein that binds to and facilitates the assembly of lysosomal proton-transporting V-type ATPase (v-ATPase), resulting in enhanced lysosomal acidification and trafficking. By bringing the v-ATPase accessory protein ATP6AP2 and the v-ATPase subunit ATP6V0D1 together, allows v-ATPase complex formation and activation. TMEM9-controlled vesicular acidification induces hyperactivation of Wnt/beta-catenin signaling, involved in development, tissue homeostasis and tissue regeneration, through lysosomal degradation of adenomatous polyposis coli/APC. In the liver, involved in hepatic regeneration. The polypeptide is Proton-transporting V-type ATPase complex assembly regulator TMEM9 (Mus musculus (Mouse)).